Reading from the N-terminus, the 214-residue chain is Cytochrome c biogenesis ATP-binding export protein CcmA (214 aa).

Residues 12–214 form the ABC transporter domain; sequence LAAHALAFSR…TRMLTLEAAA (203 aa). Residue 44–51 participates in ATP binding; that stretch reads GDNGAGKT.

Belongs to the ABC transporter superfamily. CcmA exporter (TC 3.A.1.107) family. The complex is composed of two ATP-binding proteins (CcmA) and two transmembrane proteins (CcmB).

It is found in the cell inner membrane. The enzyme catalyses heme b(in) + ATP + H2O = heme b(out) + ADP + phosphate + H(+). Its function is as follows. Part of the ABC transporter complex CcmAB involved in the biogenesis of c-type cytochromes; once thought to export heme, this seems not to be the case, but its exact role is uncertain. Responsible for energy coupling to the transport system. The chain is Cytochrome c biogenesis ATP-binding export protein CcmA from Xanthomonas oryzae pv. oryzae (strain MAFF 311018).